The chain runs to 109 residues: Nucleoid-associated protein CGSHiEE_00780 (109 aa).

The protein belongs to the YbaB/EbfC family. Homodimer.

It localises to the cytoplasm. Its subcellular location is the nucleoid. Binds to DNA and alters its conformation. May be involved in regulation of gene expression, nucleoid organization and DNA protection. The sequence is that of Nucleoid-associated protein CGSHiEE_00780 from Haemophilus influenzae (strain PittEE).